Reading from the N-terminus, the 578-residue chain is Probable nucleoredoxin 1 (578 aa).

Thioredoxin domains are found at residues serine 18 to arginine 172, serine 178 to glutamine 321, and glutamate 325 to alanine 485.

The protein belongs to the nucleoredoxin family.

It carries out the reaction [protein]-dithiol + NAD(+) = [protein]-disulfide + NADH + H(+). It catalyses the reaction [protein]-dithiol + NADP(+) = [protein]-disulfide + NADPH + H(+). Functionally, probable thiol-disulfide oxidoreductase required for pollen tube growth and pollen function in the pistil. Seems not to be required for in vitro pollen tube growth. May be involved in the generation of lipid signaling molecules in pistil. In Arabidopsis thaliana (Mouse-ear cress), this protein is Probable nucleoredoxin 1.